Reading from the N-terminus, the 113-residue chain is Ribonuclease P protein component (113 aa).

Residues 1–10 are compositionally biased toward basic residues; sequence MLPTRHRMRT. A disordered region spans residues 1 to 23; sequence MLPTRHRMRTSAHFSTTVRSGAR.

Belongs to the RnpA family. As to quaternary structure, consists of a catalytic RNA component (M1 or rnpB) and a protein subunit.

The enzyme catalyses Endonucleolytic cleavage of RNA, removing 5'-extranucleotides from tRNA precursor.. In terms of biological role, RNaseP catalyzes the removal of the 5'-leader sequence from pre-tRNA to produce the mature 5'-terminus. It can also cleave other RNA substrates such as 4.5S RNA. The protein component plays an auxiliary but essential role in vivo by binding to the 5'-leader sequence and broadening the substrate specificity of the ribozyme. This is Ribonuclease P protein component from Kocuria rhizophila (strain ATCC 9341 / DSM 348 / NBRC 103217 / DC2201).